The following is a 95-amino-acid chain: uncharacterized protein (95 aa).

Composition is skewed to basic and acidic residues over residues 1–28 (MRRA…KERC) and 41–53 (DERV…KGRP). Residues 1-73 (MRRAEVKRSA…RTSRAGSSWQ (73 aa)) are disordered.

This is an uncharacterized protein from Homo sapiens (Human).